Consider the following 220-residue polypeptide: Protein GrpE (220 aa).

A disordered region spans residues 1-55; it reads MCGGDVQGQGVASGCDEALERADSLRASDPVPVESGEGSVPGEHSQELETGASEE.

The protein belongs to the GrpE family. In terms of assembly, homodimer.

The protein resides in the cytoplasm. In terms of biological role, participates actively in the response to hyperosmotic and heat shock by preventing the aggregation of stress-denatured proteins, in association with DnaK and GrpE. It is the nucleotide exchange factor for DnaK and may function as a thermosensor. Unfolded proteins bind initially to DnaJ; upon interaction with the DnaJ-bound protein, DnaK hydrolyzes its bound ATP, resulting in the formation of a stable complex. GrpE releases ADP from DnaK; ATP binding to DnaK triggers the release of the substrate protein, thus completing the reaction cycle. Several rounds of ATP-dependent interactions between DnaJ, DnaK and GrpE are required for fully efficient folding. The chain is Protein GrpE from Treponema pallidum (strain Nichols).